The following is a 463-amino-acid chain: mRNA-capping enzyme subunit alpha (463 aa).

Lysine 66 serves as the catalytic N6-GMP-lysine intermediate. Residues 404 to 463 (WEERKSKKRTHSSISGPMLPPVAETKAPREATQSRYIDDEDWSDEADDDDEDSLKRARIE) are disordered. Positions 441-455 (DDEDWSDEADDDDED) are enriched in acidic residues.

Belongs to the eukaryotic GTase family. Heterodimer. The mRNA-capping enzyme is composed of two separate chains alpha and beta, respectively a mRNA guanylyltransferase and an mRNA 5'-triphosphate monophosphatase.

Its subcellular location is the nucleus. The catalysed reaction is a 5'-end diphospho-ribonucleoside in mRNA + GTP + H(+) = a 5'-end (5'-triphosphoguanosine)-ribonucleoside in mRNA + diphosphate. Functionally, second step of mRNA capping. Transfer of the GMP moiety of GTP to the 5'-end of RNA via an enzyme-GMP covalent reaction intermediate. This Eremothecium gossypii (strain ATCC 10895 / CBS 109.51 / FGSC 9923 / NRRL Y-1056) (Yeast) protein is mRNA-capping enzyme subunit alpha (CEG1).